A 582-amino-acid chain; its full sequence is Phosphoribosylaminoimidazole carboxylase (582 aa).

The ATP-grasp domain occupies 114–305 (KKYLAERGVA…QFENHLRAIL (192 aa)). Position 143–200 (143–200 (AGRLGLPLMLKAKTLAYDGRGNSPLKSASSEDIQASLKFLGDRPLYAEGWAPFVKEVA)) interacts with ATP.

It in the C-terminal section; belongs to the AIR carboxylase family. Class I subfamily.

The catalysed reaction is 5-amino-1-(5-phospho-D-ribosyl)imidazole-4-carboxylate + H(+) = 5-amino-1-(5-phospho-beta-D-ribosyl)imidazole + CO2. The protein operates within purine metabolism; IMP biosynthesis via de novo pathway; 5-amino-1-(5-phospho-D-ribosyl)imidazole-4-carboxylate from 5-amino-1-(5-phospho-D-ribosyl)imidazole (carboxylase route): step 1/1. In Cryptococcus neoformans var. neoformans serotype D (strain B-3501A) (Filobasidiella neoformans), this protein is Phosphoribosylaminoimidazole carboxylase (ADE2).